Here is a 704-residue protein sequence, read N- to C-terminus: DNA ligase (704 aa).

NAD(+) is bound by residues 43–47 (DADYD), 92–93 (SL), and glutamate 124. The active-site N6-AMP-lysine intermediate is the lysine 126. 4 residues coordinate NAD(+): arginine 147, glutamate 182, lysine 298, and lysine 322. 4 residues coordinate Zn(2+): cysteine 427, cysteine 430, cysteine 445, and cysteine 451. In terms of domain architecture, BRCT spans 625–704 (PVASPVAGKI…DGWLRLIGDA (80 aa)).

Belongs to the NAD-dependent DNA ligase family. LigA subfamily. Mg(2+) is required as a cofactor. It depends on Mn(2+) as a cofactor.

The catalysed reaction is NAD(+) + (deoxyribonucleotide)n-3'-hydroxyl + 5'-phospho-(deoxyribonucleotide)m = (deoxyribonucleotide)n+m + AMP + beta-nicotinamide D-nucleotide.. Functionally, DNA ligase that catalyzes the formation of phosphodiester linkages between 5'-phosphoryl and 3'-hydroxyl groups in double-stranded DNA using NAD as a coenzyme and as the energy source for the reaction. It is essential for DNA replication and repair of damaged DNA. This Cereibacter sphaeroides (strain ATCC 17023 / DSM 158 / JCM 6121 / CCUG 31486 / LMG 2827 / NBRC 12203 / NCIMB 8253 / ATH 2.4.1.) (Rhodobacter sphaeroides) protein is DNA ligase.